Here is a 244-residue protein sequence, read N- to C-terminus: Type III pantothenate kinase (244 aa).

ATP is bound at residue Asp8–Lys15. Substrate-binding positions include Tyr88 and Gly94–Arg97. Asp96 (proton acceptor) is an active-site residue. A K(+)-binding site is contributed by Asp117. Residue Thr120 participates in ATP binding. A substrate-binding site is contributed by Thr175.

Belongs to the type III pantothenate kinase family. As to quaternary structure, homodimer. NH4(+) is required as a cofactor. The cofactor is K(+).

The protein resides in the cytoplasm. The catalysed reaction is (R)-pantothenate + ATP = (R)-4'-phosphopantothenate + ADP + H(+). Its pathway is cofactor biosynthesis; coenzyme A biosynthesis; CoA from (R)-pantothenate: step 1/5. In terms of biological role, catalyzes the phosphorylation of pantothenate (Pan), the first step in CoA biosynthesis. The protein is Type III pantothenate kinase of Porphyromonas gingivalis (strain ATCC BAA-308 / W83).